We begin with the raw amino-acid sequence, 306 residues long: Agmatinase (306 aa).

Residues His126, Asp149, His151, Asp153, Asp230, and Asp232 each coordinate Mn(2+).

Belongs to the arginase family. Agmatinase subfamily. Mn(2+) serves as cofactor.

It catalyses the reaction agmatine + H2O = urea + putrescine. It participates in amine and polyamine biosynthesis; putrescine biosynthesis via agmatine pathway; putrescine from agmatine: step 1/1. Functionally, catalyzes the formation of putrescine from agmatine. The chain is Agmatinase from Escherichia coli O1:K1 / APEC.